The primary structure comprises 57 residues: Large ribosomal subunit protein bL32 (57 aa).

Residues 1 to 19 (MAVPKRRMSRSNTRSRRSQ) are compositionally biased toward basic residues. The interval 1-21 (MAVPKRRMSRSNTRSRRSQWK) is disordered.

It belongs to the bacterial ribosomal protein bL32 family.

This is Large ribosomal subunit protein bL32 from Mycobacteroides abscessus (strain ATCC 19977 / DSM 44196 / CCUG 20993 / CIP 104536 / JCM 13569 / NCTC 13031 / TMC 1543 / L948) (Mycobacterium abscessus).